Consider the following 687-residue polypeptide: Glycine--tRNA ligase beta subunit (687 aa).

This sequence belongs to the class-II aminoacyl-tRNA synthetase family. As to quaternary structure, tetramer of two alpha and two beta subunits.

It is found in the cytoplasm. The enzyme catalyses tRNA(Gly) + glycine + ATP = glycyl-tRNA(Gly) + AMP + diphosphate. In Trichlorobacter lovleyi (strain ATCC BAA-1151 / DSM 17278 / SZ) (Geobacter lovleyi), this protein is Glycine--tRNA ligase beta subunit.